We begin with the raw amino-acid sequence, 589 residues long: MKTINENAPQVSSWQTYRRLLAFAKPYRLLLVAALIAALIEAAGTTGFLALMKPITDETFIYKNAEVSRWLPVQIILLFVIRGAAGYITDMAMGKSARSIARDLRVKVMSKYLRLPGSRFDSEPVPSMLIRLGSDSDQVAQAAVDAVKVMIQQSLQVIGALALMLWHSWQVTLTILVLAPVLAWVMDKVARRYRRISHSIQESGAHLLQAADQTLSSHQEVKIYGAQQSEMERYSGLADRNLRLAMKVESTRGISTATVQMIGAIGLSALLFVAGAQALAGRLTAGDFVVLMTSMLTIIPGLKQLTNVQNMVQRGLASAERLFSVLDSPDEPDQGQVPLTRAKGLIEFRDVTARYPGQANPALADVSFVAQPGTVTAIVGRSGSGKSSLIKLIPRFYEAESGQILLDGHPVQAYALADLRRQIALVGQQVMLFDGSIAENVAYGEMRQCDAGQLERAIQGANAMEFVAQLPEGLQSHVGTKGGRLSGGQRQRLAIARAMLKDAPILILDEATAALDNESERLVQDALHKLMPDRTTLVIAHRLSTIEHADQVLVMDQGRIVERGTHQELLALGGLYSHLHGMQFRERQA.

5 helical membrane-spanning segments follow: residues 29-49 (LLLV…TGFL), 70-90 (WLPV…YITD), 157-177 (VIGA…TILV), 261-281 (MIGA…ALAG), and 283-303 (LTAG…PGLK). Positions 32–314 (VAALIAALIE…LTNVQNMVQR (283 aa)) constitute an ABC transmembrane type-1 domain. The ABC transporter domain maps to 346–582 (IEFRDVTARY…GGLYSHLHGM (237 aa)). An ATP-binding site is contributed by 380–387 (GRSGSGKS).

This sequence belongs to the ABC transporter superfamily. Lipid exporter (TC 3.A.1.106) family. In terms of assembly, homodimer.

The protein localises to the cell inner membrane. It carries out the reaction ATP + H2O + lipid A-core oligosaccharideSide 1 = ADP + phosphate + lipid A-core oligosaccharideSide 2.. Involved in lipopolysaccharide (LPS) biosynthesis. Translocates lipid A-core from the inner to the outer leaflet of the inner membrane. Transmembrane domains (TMD) form a pore in the inner membrane and the ATP-binding domain (NBD) is responsible for energy generation. The polypeptide is ATP-dependent lipid A-core flippase (Xanthomonas campestris pv. campestris (strain 8004)).